Reading from the N-terminus, the 622-residue chain is Presenilin-A (622 aa).

The segment covering 1–16 (MKENEDEINKTDEKYK) has biased composition (basic and acidic residues). Disordered regions lie at residues 1–65 (MKEN…NLEN) and 132–160 (VSEQ…DETE). The Cytoplasmic portion of the chain corresponds to 1 to 168 (MKENEDEINK…TEVPELVDYS (168 aa)). Low complexity predominate over residues 21–62 (SNNGNNKNKNNNNNNNNNNNNNNNNNNNNNNNNNNNNNGNSN). A compositionally biased stretch (acidic residues) spans 147 to 160 (DLDEDDDDDDDETE). Residues 169–189 (EMIVSILYPVCITMVIVVLAI) form a helical membrane-spanning segment. The Lumenal portion of the chain corresponds to 190–227 (RAISSSTSKNSQIVEISNDNSGGNGDSSSGADKMVFDS). Residues 228 to 248 (VVNSLIFLAVIILSTTIMVVL) traverse the membrane as a helical segment. Residues 249–265 (YKFKLMKALYAWLMGTS) are Cytoplasmic-facing. A helical transmembrane segment spans residues 266 to 286 (ILLLGVFGGFLFLILLAYLNL). Residues 287 to 289 (GLD) lie on the Lumenal side of the membrane. The chain crosses the membrane as a helical span at residues 290–310 (YVTFVIVVWNFSVGGIVCIFW). Residue Y311 is a topological domain, cytoplasmic. The helical transmembrane segment at 312–332 (SPKLLNQGYLISISVLMALFF) threads the bilayer. Over 333 to 341 (SRLPDWTTW) the chain is Lumenal. A helical transmembrane segment spans residues 342–362 (GILSIVSIYDIFAVLCPGGPL). D351 is a catalytic residue. Residues 363-538 (RILIETAQKR…SYVKPKQSIR (176 aa)) lie on the Cytoplasmic side of the membrane. Residues 419 to 477 (NNNNNEDENKNNTEDGNNNNNKNKNNNNNNNNRIENENGAENSSENGSITPPPTIPNFI) form a disordered region. Low complexity predominate over residues 432–466 (EDGNNNNNKNKNNNNNNNNRIENENGAENSSENGS). The chain crosses the membrane as a helical span at residues 539–559 (LGLGDFVFYSVLIGKAASYQI). The active site involves D543. The Lumenal portion of the chain corresponds to 560–562 (TTV). A helical transmembrane segment spans residues 563-583 (FTVFIAIITGLFLTLILLAVF). Over 584–588 (RRALP) the chain is Cytoplasmic. The PAL signature appears at 588–590 (PAL). An intramembrane region (helical) is located at residues 589 to 609 (ALPMSIIFGIIVFFLTFKILI). Topologically, residues 610–622 (QYIYFLGENQIFV) are cytoplasmic.

This sequence belongs to the peptidase A22A family. Homodimer. Component of the gamma-secretase complex, a complex composed of a presenilin homodimer, nicastrin, aph1 and pen2.

The protein localises to the endoplasmic reticulum membrane. It is found in the golgi apparatus membrane. Its function is as follows. Probable catalytic subunit of the gamma-secretase complex, an endoprotease complex that catalyzes the intramembrane cleavage of integral membrane proteins such as Notch receptors. Requires the other members of the gamma-secretase complex to have a protease activity. The chain is Presenilin-A (psenA) from Dictyostelium discoideum (Social amoeba).